Reading from the N-terminus, the 129-residue chain is Large ribosomal subunit protein bL20 (129 aa).

A compositionally biased stretch (basic residues) spans 1–17 (MARVKRSVNAHKKRRSV). Positions 1–29 (MARVKRSVNAHKKRRSVLKASKGYRGQRS) are disordered.

This sequence belongs to the bacterial ribosomal protein bL20 family.

In terms of biological role, binds directly to 23S ribosomal RNA and is necessary for the in vitro assembly process of the 50S ribosomal subunit. It is not involved in the protein synthesizing functions of that subunit. The polypeptide is Large ribosomal subunit protein bL20 (Mycobacterium ulcerans (strain Agy99)).